The following is a 94-amino-acid chain: Putative defensin-like protein 88 (94 aa).

Positions 1–26 are cleaved as a signal peptide; the sequence is MATQKFSYFLLVLLMVFALILPSIIS. Disulfide bonds link Cys-32–Cys-72, Cys-38–Cys-59, and Cys-48–Cys-71.

This sequence belongs to the DEFL family.

It localises to the secreted. This is Putative defensin-like protein 88 from Arabidopsis thaliana (Mouse-ear cress).